The following is a 449-amino-acid chain: Glutamyl-tRNA reductase (449 aa).

Substrate is bound by residues 58-61 (TCNR), S121, 126-128 (ETQ), and Q132. C59 acts as the Nucleophile in catalysis. 203-208 (GLGEMA) contributes to the NADP(+) binding site.

Belongs to the glutamyl-tRNA reductase family. In terms of assembly, homodimer.

The catalysed reaction is (S)-4-amino-5-oxopentanoate + tRNA(Glu) + NADP(+) = L-glutamyl-tRNA(Glu) + NADPH + H(+). The protein operates within porphyrin-containing compound metabolism; protoporphyrin-IX biosynthesis; 5-aminolevulinate from L-glutamyl-tRNA(Glu): step 1/2. Catalyzes the NADPH-dependent reduction of glutamyl-tRNA(Glu) to glutamate 1-semialdehyde (GSA). This is Glutamyl-tRNA reductase from Helicobacter pylori (strain Shi470).